Here is a 464-residue protein sequence, read N- to C-terminus: Protein FAM90A12 (464 aa).

3 disordered regions span residues 1–42 (MMAR…DPRL), 70–389 (PATL…HDGA), and 411–437 (APSF…SEAP). Composition is skewed to basic and acidic residues over residues 74–89 (GKKE…KPRA) and 97–114 (NKDK…DPQR). A compositionally biased stretch (low complexity) spans 180–197 (LASLSPLRKASLSSSSSL).

This sequence belongs to the FAM90 family.

This chain is Protein FAM90A12, found in Homo sapiens (Human).